The chain runs to 427 residues: Heterogeneous nuclear ribonucleoprotein K (427 aa).

The segment at 1-34 (METEQQEETFTNTETNGKRPAEDMEEEQAFKRSR) is disordered. The span at 16-34 (NGKRPAEDMEEEQAFKRSR) shows a compositional bias: basic and acidic residues. 2 KH domains span residues 39-101 (MVEL…LKKI) and 117-182 (DCEL…IKII). A run of 2 repeats spans residues 51 to 73 (AGAVIGKGGKNIKALRTDYNASV) and 56 to 59 (GKGG). The tract at residues 51–385 (AGAVIGKGGK…QIRHESGASI (335 aa)) is 2 X 22 AA approximate repeats. The 5 X 4 AA repeats of G-X-G-G stretch occupies residues 56 to 371 (GKGGKNIKAL…LAGSIIGKGG (316 aa)). Residues 209–246 (YGGFTMMFDDRRGRPVGFPMRGRGGFDRMPPNRGGRPM) are RNA-binding RGG-box. 3 repeat units span residues 218-223 (DRRGRP), 230-233 (GRGG), and 240-243 (NRGG). Residues 218-302 (DRRGRPVGFP…LMSYDRRGRP (85 aa)) are 2 X 6 AA approximate repeats. Positions 221–305 (GRPVGFPMRG…YDRRGRPGDR (85 aa)) are disordered. Residues 249 to 258 (SRRDYDDMSP) show a composition bias toward basic and acidic residues. A run of 4 repeats spans residues 268–271 (GRGG), 297–302 (DRRGRP), 363–385 (AGSIIGKGGQRIKQIRHESGASI), and 368–371 (GKGG). The span at 295–305 (SYDRRGRPGDR) shows a compositional bias: basic and acidic residues. In terms of domain architecture, KH 3 spans 351–415 (IITTQVTIPK…DQIQNAQYLL (65 aa)).

The protein resides in the cytoplasm. It localises to the nucleus. The protein localises to the nucleoplasm. Functionally, one of the major pre-mRNA-binding proteins. Binds tenaciously to poly(C) sequences. Likely to play a role in the nuclear metabolism of hnRNAs, particularly for pre-mRNAs that contain cytidine-rich sequences. Can also bind poly(C) single-stranded DNA. May play an important role in p53/TP53 response to DNA damage, acting at the level of both transcription activation and repression. As part of a ribonucleoprotein complex, may negatively regulate the transcription of genes involved in neuronal differentiation. This Gallus gallus (Chicken) protein is Heterogeneous nuclear ribonucleoprotein K (HNRNPK).